Here is a 216-residue protein sequence, read N- to C-terminus: Probable nicotinate-nucleotide adenylyltransferase (216 aa).

It belongs to the NadD family.

It catalyses the reaction nicotinate beta-D-ribonucleotide + ATP + H(+) = deamido-NAD(+) + diphosphate. It functions in the pathway cofactor biosynthesis; NAD(+) biosynthesis; deamido-NAD(+) from nicotinate D-ribonucleotide: step 1/1. Functionally, catalyzes the reversible adenylation of nicotinate mononucleotide (NaMN) to nicotinic acid adenine dinucleotide (NaAD). This chain is Probable nicotinate-nucleotide adenylyltransferase, found in Shewanella pealeana (strain ATCC 700345 / ANG-SQ1).